A 317-amino-acid chain; its full sequence is Putative ribosomal protein uL10-like (317 aa).

A Phosphotyrosine modification is found at tyrosine 24. Threonine 59 is subject to Phosphothreonine. A disordered region spans residues 292–317 (AAAPAKVEAKEESEESDEDMGFGLFD). Residue lysine 297 forms a Glycyl lysine isopeptide (Lys-Gly) (interchain with G-Cter in SUMO1); alternate linkage. Lysine 297 participates in a covalent cross-link: Glycyl lysine isopeptide (Lys-Gly) (interchain with G-Cter in SUMO2); alternate. The segment covering 302–311 (EESEESDEDM) has biased composition (acidic residues). 2 positions are modified to phosphoserine: serine 304 and serine 307.

This sequence belongs to the universal ribosomal protein uL10 family. As to quaternary structure, P0 forms a pentameric complex by interaction with dimers of P1 and P2.

Its function is as follows. Ribosomal protein P0 is the functional equivalent of E.coli protein L10. This is Putative ribosomal protein uL10-like (RPLP0P6) from Homo sapiens (Human).